Here is a 627-residue protein sequence, read N- to C-terminus: 1-deoxy-D-xylulose-5-phosphate synthase (627 aa).

Residues His-75 and 116–118 (AHS) each bind thiamine diphosphate. Asp-147 lines the Mg(2+) pocket. Thiamine diphosphate-binding positions include 148-149 (GA), Asn-177, Tyr-284, and Glu-366. A Mg(2+)-binding site is contributed by Asn-177.

It belongs to the transketolase family. DXPS subfamily. Homodimer. Mg(2+) serves as cofactor. Thiamine diphosphate is required as a cofactor.

The catalysed reaction is D-glyceraldehyde 3-phosphate + pyruvate + H(+) = 1-deoxy-D-xylulose 5-phosphate + CO2. It participates in metabolic intermediate biosynthesis; 1-deoxy-D-xylulose 5-phosphate biosynthesis; 1-deoxy-D-xylulose 5-phosphate from D-glyceraldehyde 3-phosphate and pyruvate: step 1/1. Its function is as follows. Catalyzes the acyloin condensation reaction between C atoms 2 and 3 of pyruvate and glyceraldehyde 3-phosphate to yield 1-deoxy-D-xylulose-5-phosphate (DXP). The sequence is that of 1-deoxy-D-xylulose-5-phosphate synthase from Bordetella petrii (strain ATCC BAA-461 / DSM 12804 / CCUG 43448).